A 62-amino-acid polypeptide reads, in one-letter code: Large ribosomal subunit protein uL29 (62 aa).

Belongs to the universal ribosomal protein uL29 family.

This Laribacter hongkongensis (strain HLHK9) protein is Large ribosomal subunit protein uL29.